A 92-amino-acid polypeptide reads, in one-letter code: Em-like protein GEA6 (92 aa).

Composition is skewed to basic and acidic residues over residues 1–18 (MASQ…KKGE) and 37–51 (AEGR…KEQL). A disordered region spans residues 1 to 92 (MASQQEKKQL…IDESKFRTKT (92 aa)).

The protein belongs to the small hydrophilic plant seed protein family. In terms of tissue distribution, present only in nearly dry and dry seeds.

It is thought to provide protection for the cytoplasm during the desiccation stage of embryo development. This chain is Em-like protein GEA6 (EM6), found in Arabidopsis thaliana (Mouse-ear cress).